The sequence spans 69 residues: Putative membrane protein insertion efficiency factor (69 aa).

Belongs to the UPF0161 family.

It is found in the cell inner membrane. Functionally, could be involved in insertion of integral membrane proteins into the membrane. The polypeptide is Putative membrane protein insertion efficiency factor (Nitrosomonas europaea (strain ATCC 19718 / CIP 103999 / KCTC 2705 / NBRC 14298)).